Consider the following 584-residue polypeptide: Long-chain-fatty-acid--AMP ligase FadD23 (584 aa).

2 helical membrane passes run 199-219 (YFAD…WLPF) and 225-245 (LVLG…TSPV).

This sequence belongs to the ATP-dependent AMP-binding enzyme family.

It is found in the membrane. It carries out the reaction holo-[(hydroxy)phthioceranic acid synthase] + hexadecanoate + ATP = hexadecanoyl-[(hydroxy)phthioceranic acid synthase] + AMP + diphosphate. The catalysed reaction is holo-[(hydroxy)phthioceranic acid synthase] + octadecanoate + ATP = octadecanoyl-[(hydroxy)phthioceranic acid synthase] + AMP + diphosphate. The protein operates within lipid metabolism; fatty acid biosynthesis. In terms of biological role, catalyzes the activation of long-chain fatty acids as acyl-adenylates (acyl-AMP), which are then transferred to the multifunctional polyketide synthase (PKS) type III for further chain extension. Involved in the biosynthesis of sulfolipid 1 (SL-1). The chain is Long-chain-fatty-acid--AMP ligase FadD23 (fadD23) from Mycobacterium bovis (strain ATCC BAA-935 / AF2122/97).